An 887-amino-acid polypeptide reads, in one-letter code: Translation initiation factor IF-2 (887 aa).

Disordered regions lie at residues 31–87 (KLAQ…PRRI), 94–113 (SFVS…DSDA), and 129–285 (VETE…KWRK). Positions 42 to 59 (SSSEKPSTKVPEKIAKEK) are enriched in basic and acidic residues. 2 stretches are compositionally biased toward basic and acidic residues: residues 150-171 (VVAK…KEPP) and 199-212 (PKKE…EKTK). Residues 213-223 (TTQTKPQQSSD) show a composition bias toward low complexity. A compositionally biased stretch (basic and acidic residues) spans 241–273 (YRRDVSKKSGSDFRDRAKKDDNPKAFTGRDRYG). In terms of domain architecture, tr-type G spans 393 to 562 (TRPPIVAFMG…ALQAEVLELK (170 aa)). The G1 stretch occupies residues 402-409 (GHVDHGKT). Position 402–409 (402–409 (GHVDHGKT)) interacts with GTP. Positions 427–431 (AITQH) are G2. The interval 448 to 451 (DTPG) is G3. GTP-binding positions include 448 to 452 (DTPGH) and 502 to 505 (NKCD). Positions 502 to 505 (NKCD) are G4. A G5 region spans residues 538-540 (SAK).

Belongs to the TRAFAC class translation factor GTPase superfamily. Classic translation factor GTPase family. IF-2 subfamily.

The protein localises to the cytoplasm. In terms of biological role, one of the essential components for the initiation of protein synthesis. Protects formylmethionyl-tRNA from spontaneous hydrolysis and promotes its binding to the 30S ribosomal subunits. Also involved in the hydrolysis of GTP during the formation of the 70S ribosomal complex. This Chlamydia caviae (strain ATCC VR-813 / DSM 19441 / 03DC25 / GPIC) (Chlamydophila caviae) protein is Translation initiation factor IF-2.